A 265-amino-acid polypeptide reads, in one-letter code: Deoxyguanosine kinase, mitochondrial (265 aa).

ATP is bound at residue 32–40 (GNIAVGKST). 4 residues coordinate substrate: Glu-57, Tyr-88, Gln-99, and Arg-106. Glu-129 serves as the catalytic Proton acceptor. Substrate is bound by residues Arg-130 and Asp-135. Residue 190–194 (RLQRR) participates in ATP binding. Glu-199 lines the substrate pocket. 242–244 (EDF) contributes to the ATP binding site.

This sequence belongs to the DCK/DGK family. As to quaternary structure, homodimer.

It is found in the mitochondrion. It carries out the reaction 2'-deoxyguanosine + ATP = dGMP + ADP + H(+). In terms of biological role, phosphorylates deoxyguanosine in the mitochondrial matrix with high efficiency but shows very low activity against other deoxynucleosides. This chain is Deoxyguanosine kinase, mitochondrial, found in Xenopus laevis (African clawed frog).